Consider the following 234-residue polypeptide: Sugar fermentation stimulation protein homolog (234 aa).

The protein belongs to the SfsA family.

In Shewanella frigidimarina (strain NCIMB 400), this protein is Sugar fermentation stimulation protein homolog.